A 1391-amino-acid polypeptide reads, in one-letter code: DNA-directed RNA polymerase subunit beta' (1391 aa).

Residues Cys72, Cys74, Cys87, and Cys90 each contribute to the Zn(2+) site. Mg(2+) contacts are provided by Asp462, Asp464, and Asp466. Zn(2+)-binding residues include Cys816, Cys890, Cys897, and Cys900.

This sequence belongs to the RNA polymerase beta' chain family. The RNAP catalytic core consists of 2 alpha, 1 beta, 1 beta' and 1 omega subunit. When a sigma factor is associated with the core the holoenzyme is formed, which can initiate transcription. Mg(2+) is required as a cofactor. The cofactor is Zn(2+).

It carries out the reaction RNA(n) + a ribonucleoside 5'-triphosphate = RNA(n+1) + diphosphate. Its function is as follows. DNA-dependent RNA polymerase catalyzes the transcription of DNA into RNA using the four ribonucleoside triphosphates as substrates. In Neisseria gonorrhoeae (strain ATCC 700825 / FA 1090), this protein is DNA-directed RNA polymerase subunit beta'.